The following is a 61-amino-acid chain: Photosystem II reaction center X protein (61 aa).

The chain crosses the membrane as a helical span at residues 26–46; it reads IGSFIAAALLIVIPATAFLIF.

Belongs to the PsbX family. Type 2 subfamily. PSII consists of a core antenna complex that captures photons, and an electron transfer chain that converts photonic excitation into a charge separation. PSII forms dimeric complexes.

It localises to the cellular thylakoid membrane. Involved in the binding and/or turnover of quinones at the Q(B) site of Photosystem II. The sequence is that of Photosystem II reaction center X protein from Prochlorococcus marinus (strain MIT 9312).